The chain runs to 635 residues: tRNA uridine 5-carboxymethylaminomethyl modification enzyme MnmG (635 aa).

19-24 is a binding site for FAD; it reads GAGHAG. NAD(+) is bound at residue 280–294; it reads GPRYCPSIEDKIVRF.

The protein belongs to the MnmG family. In terms of assembly, homodimer. Heterotetramer of two MnmE and two MnmG subunits. FAD serves as cofactor.

Its subcellular location is the cytoplasm. NAD-binding protein involved in the addition of a carboxymethylaminomethyl (cmnm) group at the wobble position (U34) of certain tRNAs, forming tRNA-cmnm(5)s(2)U34. In Synechocystis sp. (strain ATCC 27184 / PCC 6803 / Kazusa), this protein is tRNA uridine 5-carboxymethylaminomethyl modification enzyme MnmG.